Reading from the N-terminus, the 563-residue chain is Putative solute carrier family 26 member 10P (563 aa).

5 helical membrane passes run 45 to 65 (ALLASVPPVFGLYTSFFPVLI), 75 to 91 (LSTGTFAILSLMTGSAV), 116 to 136 (VGVAAAVAFGSGALMLGMFVL), 152 to 172 (ALTSGAALHVLLSQLPSLLGL), and 352 to 372 (LAGLFSCTVVLSVLLWLGPFF). Positions 406–541 (RVDFLLQVPG…VSVQDAAAYA (136 aa)) constitute an STAS domain.

Belongs to the SLC26A/SulP transporter (TC 2.A.53) family.

It is found in the membrane. In terms of biological role, chloride/bicarbonate exchanger. The polypeptide is Putative solute carrier family 26 member 10P (SLC26A10P) (Homo sapiens (Human)).